We begin with the raw amino-acid sequence, 500 residues long: Aldehyde dehydrogenase (500 aa).

246–251 provides a ligand contact to NAD(+); sequence GSTLVG. Glutamate 269 (proton acceptor) is an active-site residue. The active-site Nucleophile is cysteine 303.

Belongs to the aldehyde dehydrogenase family.

The catalysed reaction is an aldehyde + NAD(+) + H2O = a carboxylate + NADH + 2 H(+). The protein operates within alcohol metabolism; ethanol degradation; acetate from ethanol: step 2/2. The sequence is that of Aldehyde dehydrogenase (aldA) from Agaricus bisporus (White button mushroom).